We begin with the raw amino-acid sequence, 95 residues long: UPF0213 protein PEPE_0875 (95 aa).

Positions 7 to 82 (NGFYFYVLRC…KQRTRSSKIK (76 aa)) constitute a GIY-YIG domain.

This sequence belongs to the UPF0213 family.

The polypeptide is UPF0213 protein PEPE_0875 (Pediococcus pentosaceus (strain ATCC 25745 / CCUG 21536 / LMG 10740 / 183-1w)).